Consider the following 184-residue polypeptide: Photosystem I assembly protein Ycf4 (184 aa).

2 helical membrane passes run 21–43 (NFCW…FSSY) and 58–80 (LFIP…SFYL).

This sequence belongs to the Ycf4 family.

The protein resides in the plastid. The protein localises to the chloroplast thylakoid membrane. Functionally, seems to be required for the assembly of the photosystem I complex. The sequence is that of Photosystem I assembly protein Ycf4 from Marchantia polymorpha (Common liverwort).